The following is a 90-amino-acid chain: Small ribosomal subunit protein uS15c (90 aa).

Belongs to the universal ribosomal protein uS15 family. As to quaternary structure, part of the 30S ribosomal subunit.

Its subcellular location is the plastid. It localises to the chloroplast. The chain is Small ribosomal subunit protein uS15c (rps15) from Platanus occidentalis (Sycamore).